We begin with the raw amino-acid sequence, 572 residues long: Flagellin B (572 aa).

It belongs to the bacterial flagellin family. In terms of assembly, heteromer of flaA and flaB.

The protein localises to the secreted. The protein resides in the bacterial flagellum. Flagellin is the subunit protein which polymerizes to form the filaments of bacterial flagella. The chain is Flagellin B (flaB) from Campylobacter jejuni subsp. jejuni serotype O:2 (strain ATCC 700819 / NCTC 11168).